We begin with the raw amino-acid sequence, 311 residues long: MPSTIEAIYIILIAGELTIGIWGNGFIVLVNCIDWLKRRDVSLIDIILISLAISRICLLCVISLDGFFILLFPGTYDTNVLESIMDAVWTFANNSSLWFTSCLSIFYLLKIANISHPFFFWLKLKINKVILAILLGSFLISLIISFPINGMWYNLFKVSHEENITWAFKVSTIPGAFKQLTLNLGAMVPFILCLISFFLLLFSLVRHTKQIQLHATGFRDPSTEAHMRAVKAVIIFLLLLILYYPVFLVMTSSTLIPQGKLVLMIGDIVTVIFPSSHSFILIMGNSKLRAAFLKMLRFVKGFLRRRKPFVP.

At 1 to 9 (MPSTIEAIY) the chain is on the extracellular side. The chain crosses the membrane as a helical span at residues 10 to 32 (IILIAGELTIGIWGNGFIVLVNC). Topologically, residues 33–52 (IDWLKRRDVSLIDIILISLA) are cytoplasmic. Residues 53-72 (ISRICLLCVISLDGFFILLF) traverse the membrane as a helical segment. Over 73–86 (PGTYDTNVLESIMD) the chain is Extracellular. The chain crosses the membrane as a helical span at residues 87-109 (AVWTFANNSSLWFTSCLSIFYLL). Topologically, residues 110 to 128 (KIANISHPFFFWLKLKINK) are cytoplasmic. A helical transmembrane segment spans residues 129–146 (VILAILLGSFLISLIISF). Over 147 to 179 (PINGMWYNLFKVSHEENITWAFKVSTIPGAFKQ) the chain is Extracellular. N-linked (GlcNAc...) asparagine glycosylation is present at Asn-163. A helical membrane pass occupies residues 180-202 (LTLNLGAMVPFILCLISFFLLLF). Over 203–233 (SLVRHTKQIQLHATGFRDPSTEAHMRAVKAV) the chain is Cytoplasmic. A helical membrane pass occupies residues 234 to 256 (IIFLLLLILYYPVFLVMTSSTLI). Over 257 to 260 (PQGK) the chain is Extracellular. Residues 261–283 (LVLMIGDIVTVIFPSSHSFILIM) form a helical membrane-spanning segment. The Cytoplasmic portion of the chain corresponds to 284-311 (GNSKLRAAFLKMLRFVKGFLRRRKPFVP).

This sequence belongs to the G-protein coupled receptor T2R family.

Its subcellular location is the membrane. Gustducin-coupled receptor implicated in the perception of bitter compounds in the oral cavity and the gastrointestinal tract. Signals through PLCB2 and the calcium-regulated cation channel TRPM5. This chain is Taste receptor type 2 member 9 (TAS2R9), found in Macaca mulatta (Rhesus macaque).